The chain runs to 276 residues: Probable ABC transporter permease protein NosY (276 aa).

Transmembrane regions (helical) follow at residues 20–40, 55–75, 111–131, 146–166, 179–199, and 251–271; these read WLLA…WLGA, IASL…LLAY, ILAL…ALLV, FMIS…VLSG, LGVW…LLVL, and VLWL…YAIF.

As to quaternary structure, the complex may be composed of an ATP-binding protein (NosF), a transmembrane protein (NosY) and a solute-binding protein (NosD).

The protein resides in the cell inner membrane. In terms of biological role, required for the assembly of the copper chromophores of nitrous oxide reductase. Could be part of the ABC transporter complex NosDFY. The protein is Probable ABC transporter permease protein NosY of Stutzerimonas stutzeri (Pseudomonas stutzeri).